Here is a 146-residue protein sequence, read N- to C-terminus: Mediator of RNA polymerase II transcription subunit 31 (146 aa).

A disordered region spans residues 121-146 (NANDQDENKEKEENKEVPEVRINGTN). The segment covering 126–139 (DENKEKEENKEVPE) has biased composition (basic and acidic residues).

The protein belongs to the Mediator complex subunit 31 family. In terms of assembly, component of the Mediator complex.

It is found in the nucleus. Component of the Mediator complex, a coactivator involved in the regulated transcription of nearly all RNA polymerase II-dependent genes. Mediator functions as a bridge to convey information from gene-specific regulatory proteins to the basal RNA polymerase II transcription machinery. Mediator is recruited to promoters by direct interactions with regulatory proteins and serves as a scaffold for the assembly of a functional preinitiation complex with RNA polymerase II and the general transcription factors. The polypeptide is Mediator of RNA polymerase II transcription subunit 31 (SOH1) (Candida albicans (strain SC5314 / ATCC MYA-2876) (Yeast)).